The chain runs to 543 residues: CTP synthase (543 aa).

Residues 1 to 267 (MTKYVFVTGG…ATQVLNLLNL (267 aa)) form an amidoligase domain region. Residue serine 13 coordinates CTP. Residue serine 13 coordinates UTP. Residues 14-19 (SIGKGI) and aspartate 71 each bind ATP. Residues aspartate 71 and glutamate 141 each coordinate Mg(2+). CTP-binding positions include 148 to 150 (DIE), 188 to 193 (KTKPTQ), and lysine 224. UTP is bound by residues 188–193 (KTKPTQ) and lysine 224. A Glutamine amidotransferase type-1 domain is found at 292 to 534 (EVAIVGKYVR…LAAAAKNSNR (243 aa)). An L-glutamine-binding site is contributed by glycine 354. Cysteine 381 serves as the catalytic Nucleophile; for glutamine hydrolysis. Residues 382-385 (LGMQ), glutamate 405, and arginine 462 each bind L-glutamine. Catalysis depends on residues histidine 507 and glutamate 509.

The protein belongs to the CTP synthase family. In terms of assembly, homotetramer.

The catalysed reaction is UTP + L-glutamine + ATP + H2O = CTP + L-glutamate + ADP + phosphate + 2 H(+). It carries out the reaction L-glutamine + H2O = L-glutamate + NH4(+). It catalyses the reaction UTP + NH4(+) + ATP = CTP + ADP + phosphate + 2 H(+). It functions in the pathway pyrimidine metabolism; CTP biosynthesis via de novo pathway; CTP from UDP: step 2/2. Allosterically activated by GTP, when glutamine is the substrate; GTP has no effect on the reaction when ammonia is the substrate. The allosteric effector GTP functions by stabilizing the protein conformation that binds the tetrahedral intermediate(s) formed during glutamine hydrolysis. Inhibited by the product CTP, via allosteric rather than competitive inhibition. In terms of biological role, catalyzes the ATP-dependent amination of UTP to CTP with either L-glutamine or ammonia as the source of nitrogen. Regulates intracellular CTP levels through interactions with the four ribonucleotide triphosphates. This Thermosynechococcus vestitus (strain NIES-2133 / IAM M-273 / BP-1) protein is CTP synthase.